Reading from the N-terminus, the 80-residue chain is UPF0291 protein llmg_1475 (80 aa).

This sequence belongs to the UPF0291 family.

Its subcellular location is the cytoplasm. The chain is UPF0291 protein llmg_1475 from Lactococcus lactis subsp. cremoris (strain MG1363).